The sequence spans 34 residues: Beta-theraphotoxin-Pmu1a (34 aa).

Intrachain disulfides connect Cys3-Cys18, Cys10-Cys23, and Cys17-Cys30. Leu34 carries the post-translational modification Leucine amide.

It belongs to the neurotoxin 10 (Hwtx-1) family. 34 (Jztx-26) subfamily. Expressed by the venom gland.

It is found in the secreted. Functionally, spider venom neurotoxin that blocks voltage-gated sodium channels Nav1.3/SCN3A and Nav1.8/SCN10A in human (IC(50)=2 uM and IC(50)=4 uM, respectively) and rat (IC(50)=2 uM and IC(50)=2.5 uM, respectively). This chain is Beta-theraphotoxin-Pmu1a, found in Pterinochilus murinus (Mombasa golden starburst baboon spider).